The sequence spans 86 residues: Small ribosomal subunit protein bS16 (86 aa).

It belongs to the bacterial ribosomal protein bS16 family.

The polypeptide is Small ribosomal subunit protein bS16 (Xylella fastidiosa (strain M12)).